Here is a 130-residue protein sequence, read N- to C-terminus: MAEKEKWGIANIYSSFNNTIITITDITGAETITQWSGGKVVRADRQESSPFAAMEAATRAADDAKEKGIVGLHIKVRAPGGNGPRTPGPGAQAAIRALARAGMRIGKIEDVTPIPHDGTGRPGGKRGRRV.

The segment at 108-130 (IEDVTPIPHDGTGRPGGKRGRRV) is disordered.

It belongs to the universal ribosomal protein uS11 family. In terms of assembly, part of the 30S ribosomal subunit.

In terms of biological role, located on the platform of the 30S subunit. In Methanothermobacter thermautotrophicus (strain ATCC 29096 / DSM 1053 / JCM 10044 / NBRC 100330 / Delta H) (Methanobacterium thermoautotrophicum), this protein is Small ribosomal subunit protein uS11.